We begin with the raw amino-acid sequence, 501 residues long: Melianol synthase CYP71BQ5 (501 aa).

A helical transmembrane segment spans residues 1–21; sequence MEFRLPVLLSFLLFFLMLVRH. A heme-binding site is contributed by cysteine 439.

It belongs to the cytochrome P450 family. The cofactor is heme. Mainly expressed in petioles and roots, and, to a lower extent, in leaves.

Its subcellular location is the membrane. The enzyme catalyses dihydroniloticin + 2 reduced [NADPH--hemoprotein reductase] + 2 O2 = melianol + 2 oxidized [NADPH--hemoprotein reductase] + 3 H2O + 2 H(+). The protein operates within secondary metabolite biosynthesis; terpenoid biosynthesis. Monooxygenase involved in the biosynthesis of limonoids triterpene natural products such as azadirachtin, an antifeedant widely used as bioinsecticide, and possessing many medicinal applications including anti-tumoral, anti-malarial, anti-rheumatic, antibacterial, anti-inflammatory, anti-pyretic and diuretic effects. Catalyzes the conversion of dihydroniloticin to the protolimonoid melianol. The chain is Melianol synthase CYP71BQ5 from Melia azedarach (Chinaberry tree).